The primary structure comprises 373 residues: Schlafen-like protein 1 (373 aa).

The tract at residues 1 to 67 (MAALFEENDS…ELSSEEVDIP (67 aa)) is disordered. The segment at 247–373 (KAGAKIEFRT…NQVYRLESSV (127 aa)) is SLFN-like fold.

Belongs to the Schlafen family. In terms of assembly, component of the trimeric PUCH (precursor of 21U RNA 5'-end cleavage holoenzyme) complex; consisting of tofu-1, tofu-2 and either slfl-3 or slfl-4; which is required for processing of piRNA precursors. Within the complex, interacts (via N-terminus) with tofu-2 (via N-terminus); the interaction stabilizes tofu-2 and may form a functional nuclease. Within the complex, required for the interaction of tofu-2 (via N-terminus) with slfl-3 (via N-terminus). Interacts (via residues 82-172) with the PETISCO complex subunit tofu-6 (via residues 120-314); the interaction between the PETISCO and PUCH complex members enhances piRNA production in vivo. As to expression, expressed in the germline.

The protein resides in the cytoplasm. Component of the trimeric PUCH (precursor of 21U RNA 5'-end cleavage holoenzyme) complex, that acts as an endoribonuclease processing the 5'-end of precursor Piwi-interacting RNAs (piRNAs). The PUCH complex consists of tofu-1, tofu-2 and either slfl-3 or slfl-4, with tofu-2 exhibiting endoribonuclease activity. PUCH-mediated processing strictly requires a 7-methyl-G cap (m7 G-cap) and an uracil at position three (U3). PUCH also exhibits a strict bias for piRNA precursors with an A or G at position 1. Mature piRNA production is enhanced by the interaction of PUCH with the PETISCO complex, which is stabilizing piRNA precursors and allows their processing by PUCH. In Caenorhabditis elegans, this protein is Schlafen-like protein 1.